The chain runs to 261 residues: Cytochrome c oxidase subunit 3 (261 aa).

The Mitochondrial matrix segment spans residues 1-15 (MTHQTHAYHMVNPSP). Residues 16 to 34 (WPLTGALSALLMTSGLIMW) traverse the membrane as a helical segment. The Mitochondrial intermembrane segment spans residues 35–40 (FHFNSM). A helical transmembrane segment spans residues 41-66 (YLLMLGLTTNTLTMYQWWRDIVREST). Residues 67-72 (FQGHHT) lie on the Mitochondrial matrix side of the membrane. Residues 73–105 (PIVQKGLRYGMILFIVSEVFFFAGFFWAFYHSS) form a helical membrane-spanning segment. Residues 106–128 (LAPTPELGGCWPPTGITPLNPME) are Mitochondrial intermembrane-facing. A helical transmembrane segment spans residues 129 to 152 (VPLLNTSVLLASGVSITWAHHSLM). Residues 153 to 155 (EGN) are Mitochondrial matrix-facing. A helical membrane pass occupies residues 156-183 (RKHMLQALFITISLGVYFTLLQASEYYE). Over 184-190 (TPFTISD) the chain is Mitochondrial intermembrane. A helical membrane pass occupies residues 191–223 (GIYGSTFFMATGFHGLHVIIGSTFLIVCFMRQL). Over 224 to 232 (KFHFTSNHH) the chain is Mitochondrial matrix. A helical membrane pass occupies residues 233 to 256 (FGFEAAAWYWHFVDVVWLFLYVSI). The Mitochondrial intermembrane segment spans residues 257 to 261 (YWWGS).

It belongs to the cytochrome c oxidase subunit 3 family. Component of the cytochrome c oxidase (complex IV, CIV), a multisubunit enzyme composed of 14 subunits. The complex is composed of a catalytic core of 3 subunits MT-CO1, MT-CO2 and MT-CO3, encoded in the mitochondrial DNA, and 11 supernumerary subunits COX4I, COX5A, COX5B, COX6A, COX6B, COX6C, COX7A, COX7B, COX7C, COX8 and NDUFA4, which are encoded in the nuclear genome. The complex exists as a monomer or a dimer and forms supercomplexes (SCs) in the inner mitochondrial membrane with NADH-ubiquinone oxidoreductase (complex I, CI) and ubiquinol-cytochrome c oxidoreductase (cytochrome b-c1 complex, complex III, CIII), resulting in different assemblies (supercomplex SCI(1)III(2)IV(1) and megacomplex MCI(2)III(2)IV(2)).

Its subcellular location is the mitochondrion inner membrane. The enzyme catalyses 4 Fe(II)-[cytochrome c] + O2 + 8 H(+)(in) = 4 Fe(III)-[cytochrome c] + 2 H2O + 4 H(+)(out). Functionally, component of the cytochrome c oxidase, the last enzyme in the mitochondrial electron transport chain which drives oxidative phosphorylation. The respiratory chain contains 3 multisubunit complexes succinate dehydrogenase (complex II, CII), ubiquinol-cytochrome c oxidoreductase (cytochrome b-c1 complex, complex III, CIII) and cytochrome c oxidase (complex IV, CIV), that cooperate to transfer electrons derived from NADH and succinate to molecular oxygen, creating an electrochemical gradient over the inner membrane that drives transmembrane transport and the ATP synthase. Cytochrome c oxidase is the component of the respiratory chain that catalyzes the reduction of oxygen to water. Electrons originating from reduced cytochrome c in the intermembrane space (IMS) are transferred via the dinuclear copper A center (CU(A)) of subunit 2 and heme A of subunit 1 to the active site in subunit 1, a binuclear center (BNC) formed by heme A3 and copper B (CU(B)). The BNC reduces molecular oxygen to 2 water molecules using 4 electrons from cytochrome c in the IMS and 4 protons from the mitochondrial matrix. This Halichoerus grypus (Gray seal) protein is Cytochrome c oxidase subunit 3 (MT-CO3).